Here is a 97-residue protein sequence, read N- to C-terminus: Acylphosphatase-2 (97 aa).

An N-acetylalanine modification is found at A2. The Acylphosphatase-like domain maps to S7–Y97. Active-site residues include R22 and N40. S91 carries the phosphoserine modification.

Belongs to the acylphosphatase family.

It catalyses the reaction an acyl phosphate + H2O = a carboxylate + phosphate + H(+). Its function is as follows. Its physiological role is not yet clear. The sequence is that of Acylphosphatase-2 (Acyp2) from Rattus norvegicus (Rat).